Reading from the N-terminus, the 591-residue chain is V-type ATP synthase alpha chain (591 aa).

Residue 233–240 (GPFGAGKT) coordinates ATP.

It belongs to the ATPase alpha/beta chains family.

It carries out the reaction ATP + H2O + 4 H(+)(in) = ADP + phosphate + 5 H(+)(out). Functionally, produces ATP from ADP in the presence of a proton gradient across the membrane. The V-type alpha chain is a catalytic subunit. The chain is V-type ATP synthase alpha chain from Streptococcus pneumoniae (strain ATCC 700669 / Spain 23F-1).